An 871-amino-acid chain; its full sequence is Dual O-methyltransferase/FAD-dependent monooxygenase CTB3 (871 aa).

Positions 1–429 (MMQFQRDLEA…GLLTVRSAGQ (429 aa)) are O-methyltransferase. Asp-279 contributes to the S-adenosyl-L-methionine binding site. His-331 functions as the Proton acceptor in the catalytic mechanism. The tract at residues 430-871 (TALSGTNTLT…NLVDCSEFVF (442 aa)) is FAD-dependent monooxygenase. The FAD site is built by Glu-485, Arg-569, Asp-793, and Ala-806.

The protein in the C-terminal section; belongs to the paxM FAD-dependent monooxygenase family. This sequence in the N-terminal section; belongs to the class I-like SAM-binding methyltransferase superfamily. Cation-independent O-methyltransferase family. COMT subfamily.

It carries out the reaction nor-toralactone + S-adenosyl-L-methionine = toralactone + S-adenosyl-L-homocysteine + H(+). It catalyses the reaction toralactone + NADH + O2 + H(+) = 1-(3,4,5-trihydroxy-7-methoxynaphthalen-2-yl)propan-2-one + CO2 + NAD(+). It participates in mycotoxin biosynthesis. In terms of biological role, dual O-methyltransferase/FAD-dependent monooxygenase; part of the gene cluster that mediates the biosynthesis of cercosporin, a light-activated, non-host-selective toxin. The perylenequinone chromophore of cercosporin absorbs light energy to attain an electronically-activated triplet state and produces active oxygen species such as the hydroxyl radical, superoxide, hydrogen peroxide or singlet oxygen upon reaction with oxygen molecules. These reactive oxygen species cause damage to various cellular components including lipids, proteins and nucleic acids. The first step of cercosporin biosynthesis is performed by the polyketide synthase CTB1 which catalyzes the formation of nor-toralactone. The starter unit acyltransferase (SAT) domain of CTB1 initiates polyketide extension by the selective utilization of acetyl-CoA, which is elongated to the heptaketide in the beta-ketoacyl synthase (KS) domain by successive condensations with six malonyl units introduced by the malonyl acyltransferase (MAT) domain. The product template (PT) domain catalyzes C4-C9 and C2-C11 aldol cyclizations and dehydrations to a trihydroxynaphthalene, which is thought to be delivered to the thioesterase (TE) domain for product release. The bifunctional enzyme CTB3 then methylates nor-toralactone to toralactone before conducting an unusual oxidative aromatic ring opening. The O-methyltransferase CTB2 further methylates the nascent OH-6 of the CBT3 product, blocking further oxidation at this site before the reductase CTB6 reduces the 2-oxopropyl ketone at position C7, giving naphthalene. The FAD-dependent monooxygenase CTB5 in concert with the multicopper oxidase CTB12 are responsible for homodimerization of naphthalene with CTB7 installing the dioxepine moiety, finally producing cercosporin. The fasciclin domain-containing protein CTB11 might act with CTB5 and CTB12 whereas the roles of CTB9 and CTB10 have still to be elucidated. This Cercospora beticola (Sugarbeet leaf spot fungus) protein is Dual O-methyltransferase/FAD-dependent monooxygenase CTB3.